The chain runs to 197 residues: RNA chaperone ProQ (197 aa).

Residues 115–138 form a disordered region; that stretch reads RAAAKKAQQKKHPRKPANKNLKKE. Residues 117 to 131 are compositionally biased toward basic residues; the sequence is AAKKAQQKKHPRKPA.

The protein belongs to the ProQ family.

The protein localises to the cytoplasm. Functionally, RNA chaperone with significant RNA binding, RNA strand exchange and RNA duplexing activities. This chain is RNA chaperone ProQ, found in Haemophilus influenzae (strain ATCC 51907 / DSM 11121 / KW20 / Rd).